Consider the following 350-residue polypeptide: Secreted effector protein PipB2 (350 aa).

4 Pentapeptide repeat domains span residues alanine 162–glycine 201, alanine 202–glycine 241, cysteine 247–glycine 286, and alanine 287–aspartate 326.

Interacts with the host kinesin light chain (KLC), a subunit of the kinesin-1 motor complex.

It is found in the secreted. The protein resides in the host membrane. Its function is as follows. Effector proteins function to alter host cell physiology and promote bacterial survival in host tissues. Involved in the reorganization of late endosome/lysosome (LE/Lys) compartments in mammalian cells. Necessary and sufficient to link kinesin-1 onto the Salmonella-containing vacuole (SCV) membrane. Required for centrifugal extension of lysosomal glycoprotein-rich membrane tubules, known as Salmonella-induced filaments (Sifs), away from the SCV and toward the cell periphery. Required for virulence, but not for intracellular survival and replication in phagocytic cells. The sequence is that of Secreted effector protein PipB2 (pipB2) from Salmonella typhi.